The chain runs to 284 residues: Bifunctional protein FolD (284 aa).

NADP(+) contacts are provided by residues 165-167, Ser190, and Ile231; that span reads GRS.

The protein belongs to the tetrahydrofolate dehydrogenase/cyclohydrolase family. In terms of assembly, homodimer.

It catalyses the reaction (6R)-5,10-methylene-5,6,7,8-tetrahydrofolate + NADP(+) = (6R)-5,10-methenyltetrahydrofolate + NADPH. It carries out the reaction (6R)-5,10-methenyltetrahydrofolate + H2O = (6R)-10-formyltetrahydrofolate + H(+). It participates in one-carbon metabolism; tetrahydrofolate interconversion. Functionally, catalyzes the oxidation of 5,10-methylenetetrahydrofolate to 5,10-methenyltetrahydrofolate and then the hydrolysis of 5,10-methenyltetrahydrofolate to 10-formyltetrahydrofolate. The polypeptide is Bifunctional protein FolD (Dechloromonas aromatica (strain RCB)).